Consider the following 421-residue polypeptide: Cell division protein FtsZ (421 aa).

GTP contacts are provided by residues 26–30, 132–134, E163, R167, and N211; these read GGGGN and GTG.

Belongs to the FtsZ family. In terms of assembly, homodimer. Polymerizes to form a dynamic ring structure in a strictly GTP-dependent manner. Interacts directly with several other division proteins.

The protein localises to the cytoplasm. Functionally, essential cell division protein that forms a contractile ring structure (Z ring) at the future cell division site. The regulation of the ring assembly controls the timing and the location of cell division. One of the functions of the FtsZ ring is to recruit other cell division proteins to the septum to produce a new cell wall between the dividing cells. Binds GTP and shows GTPase activity. The polypeptide is Cell division protein FtsZ (Haemophilus influenzae (strain ATCC 51907 / DSM 11121 / KW20 / Rd)).